The following is a 233-amino-acid chain: Ribonuclease HII (233 aa).

Positions 26 to 215 constitute an RNase H type-2 domain; it reads QLVAGIDEVG…VRASEGEGLE (190 aa). Positions 32, 33, and 124 each coordinate a divalent metal cation. The interval 211-233 is disordered; sequence GEGLETAAGRQSSEGKKGRRPRG.

The protein belongs to the RNase HII family. Mn(2+) serves as cofactor. It depends on Mg(2+) as a cofactor.

It localises to the cytoplasm. It catalyses the reaction Endonucleolytic cleavage to 5'-phosphomonoester.. Endonuclease that specifically degrades the RNA of RNA-DNA hybrids. This is Ribonuclease HII from Syntrophobacter fumaroxidans (strain DSM 10017 / MPOB).